Consider the following 525-residue polypeptide: Probable alpha-galactosidase A (525 aa).

The signal sequence occupies residues 1–17 (MHPSMTLLAILPPLVRA). The cysteines at positions 40 and 72 are disulfide-linked. N-linked (GlcNAc...) asparagine glycans are attached at residues N43, N81, and N117. The cysteines at positions 120 and 150 are disulfide-linked. Catalysis depends on D148, which acts as the Nucleophile. N197 is a glycosylation site (N-linked (GlcNAc...) asparagine). Catalysis depends on D206, which acts as the Proton donor. In terms of domain architecture, Ricin B-type lectin spans 402-525 (PPDCPMVIPT…GLPSGVDIEA (124 aa)). Intrachain disulfides connect C422/C434 and C459/C472.

The protein belongs to the glycosyl hydrolase 27 family.

The protein resides in the secreted. It carries out the reaction Hydrolysis of terminal, non-reducing alpha-D-galactose residues in alpha-D-galactosides, including galactose oligosaccharides, galactomannans and galactolipids.. Its function is as follows. Hydrolyzes a variety of simple alpha-D-galactoside as well as more complex molecules such as oligosaccharides and polysaccharides. This Aspergillus clavatus (strain ATCC 1007 / CBS 513.65 / DSM 816 / NCTC 3887 / NRRL 1 / QM 1276 / 107) protein is Probable alpha-galactosidase A (aglA).